The primary structure comprises 613 residues: Probable potassium transport system protein Kup 1 (613 aa).

12 helical membrane-spanning segments follow: residues 40-60 (VLSM…VVFV), 93-113 (MLLG…TPAI), 127-147 (PALQ…LFLL), 158-178 (LFGP…LFSV), 201-221 (AVQA…AEAL), 237-257 (WFYI…ALLL), 266-286 (PFFL…ATAA), 288-308 (VIAS…AVHL), 327-347 (IYVP…VLAF), 356-376 (AYGI…TVVM), 384-404 (LPAV…FFGA), and 409-429 (VAAG…LMVT).

The protein belongs to the HAK/KUP transporter (TC 2.A.72) family.

The protein resides in the cell inner membrane. It catalyses the reaction K(+)(in) + H(+)(in) = K(+)(out) + H(+)(out). Functionally, transport of potassium into the cell. Likely operates as a K(+):H(+) symporter. The sequence is that of Probable potassium transport system protein Kup 1 from Ralstonia nicotianae (strain ATCC BAA-1114 / GMI1000) (Ralstonia solanacearum).